We begin with the raw amino-acid sequence, 450 residues long: Sensor histidine kinase EnvZ (450 aa).

Over 1–15 (MRRLRFSPRSSFART) the chain is Cytoplasmic. The helical transmembrane segment at 16-35 (LLLIVTLLFASLVTTYLVVL) threads the bilayer. Residues 36–158 (NFAILPSLQQ…LTEIHQGDFS (123 aa)) are Periplasmic-facing. The short motif at 71–75 (VVPPA) is the polyP-periplasmic motif element. The chain crosses the membrane as a helical span at residues 159-179 (PLFRYTLAIMLLAIGGAWLFI). The region spanning 180–232 (RIQNRPLVDLEHAALQVGKGIIPPPLREYGASEVRSVTRAFNHMAAGVKQLAD) is the HAMP domain. Residues 180-450 (RIQNRPLVDL…TRAQGTTKEG (271 aa)) lie on the Cytoplasmic side of the membrane. The polyP-cytoplasmic motif motif lies at 201 to 205 (IPPPL). The interval 223–289 (MAAGVKQLAD…IIEQFIDYLR (67 aa)) is cytoplasmic dimerization domain (CDD), when dimerized forms osmosensitive core. Residues 240–440 (GVSHDLRTPL…SIRAWLPVPV (201 aa)) form the Histidine kinase domain. ATP-binding positions include H243, 347–351 (NAARY), D373, 392–393 (RG), and 402–406 (TGLGL). Residue H243 is modified to Phosphohistidine; by autocatalysis.

Homodimer. Interacts with MzrA. Post-translationally, autophosphorylated. Incubation of isolated EnvZ C-terminal fragment (residues 180-450) with increasing levels of NaCl or sucrose increases its autophosphorylation.

It localises to the cell inner membrane. It carries out the reaction ATP + protein L-histidine = ADP + protein N-phospho-L-histidine.. With respect to regulation, activity is modulated by MzrA. In the presence of 0.2 M NaCl, 2.0 mM sodium cholate (bile salts) decreases expression from the ompC promoter; how this is mediated is unknown. Autophosphorylation is inhibited by the angucycline antibiotic waldiomycin in a non-competitive manner; waldiomycin prevents dimerization of the cytoplasmic domain and autophosphorylation. Its function is as follows. Member of the two-component regulatory system EnvZ/OmpR involved in osmoregulation (particularly of genes ompF and ompC) as well as other genes. EnvZ functions as a membrane-associated protein kinase that phosphorylates OmpR in response to environmental signals; at low osmolarity OmpR activates ompF transcription, while at high osmolarity it represses ompF and activates ompC transcription. Also dephosphorylates OmpR in the presence of ATP. The cytoplasmic dimerization domain (CDD) forms an osmosensitive core; increasing osmolarity stabilizes this segment (possibly by its contraction), enhancing the autophosphorylation rate and consequently, downstream phosphotransfer to OmpR and signaling. Autophosphorylation is greater when full-length EnvZ is reconstituted in a lipid environment, lipid-mediated allostery impacts the kinase function of EnvZ. Involved in acid stress response; this requires EnvZ but not OmpR phosphorylation, and suggests that EnvZ senses cytoplasmic acidic pH. This Escherichia coli (strain K12) protein is Sensor histidine kinase EnvZ (envZ).